The following is a 404-amino-acid chain: Endophilin-B2 (404 aa).

Position 1 is an N-acetylmethionine (Met1). Residues 1 to 27 form a membrane-binding amphipathic helix region; it reads MDFNMKKLASDAGIFFTRAVQFTEEKF. The residue at position 10 (Ser10) is a Phosphoserine. Residues 24–291 form the BAR domain; sequence EEKFGQAEKT…LGSSQGAIFP (268 aa). A coiled-coil region spans residues 209 to 239; that stretch reads SASALWNDEVDKAEQELRAAQTEFDRQAEVT. The SH3 domain occupies 344–404; the sequence is SGTRKARVLY…VPVTYLELLS (61 aa). Phosphoserine is present on Ser404.

The protein belongs to the endophilin family. As to quaternary structure, homodimer, and heterodimer with SH3GLB1.

The protein resides in the cytoplasm. This chain is Endophilin-B2, found in Rattus norvegicus (Rat).